The sequence spans 439 residues: Tol-Pal system protein TolB (439 aa).

A signal peptide spans 1 to 22 (MKKPLRWLAALTALLLPLSAFA).

It belongs to the TolB family. As to quaternary structure, the Tol-Pal system is composed of five core proteins: the inner membrane proteins TolA, TolQ and TolR, the periplasmic protein TolB and the outer membrane protein Pal. They form a network linking the inner and outer membranes and the peptidoglycan layer.

It localises to the periplasm. Functionally, part of the Tol-Pal system, which plays a role in outer membrane invagination during cell division and is important for maintaining outer membrane integrity. This chain is Tol-Pal system protein TolB, found in Xanthomonas campestris pv. campestris (strain 8004).